Here is a 406-residue protein sequence, read N- to C-terminus: Putative cyclin-F3-2 (406 aa).

The tract at residues 1–107 (MARPRTRSVA…PGAAGGPWQL (107 aa)) is disordered. Low complexity-rich tracts occupy residues 11–21 (RMEATAAAAAA) and 29–57 (NPDG…NAGE).

The protein belongs to the cyclin family. Cyclin F subfamily.

The chain is Putative cyclin-F3-2 (CYCF3-2) from Oryza sativa subsp. japonica (Rice).